The primary structure comprises 113 residues: Large ribosomal subunit protein uL22 (113 aa).

The protein belongs to the universal ribosomal protein uL22 family. As to quaternary structure, part of the 50S ribosomal subunit.

Its function is as follows. This protein binds specifically to 23S rRNA; its binding is stimulated by other ribosomal proteins, e.g. L4, L17, and L20. It is important during the early stages of 50S assembly. It makes multiple contacts with different domains of the 23S rRNA in the assembled 50S subunit and ribosome. In terms of biological role, the globular domain of the protein is located near the polypeptide exit tunnel on the outside of the subunit, while an extended beta-hairpin is found that lines the wall of the exit tunnel in the center of the 70S ribosome. The sequence is that of Large ribosomal subunit protein uL22 from Trichlorobacter lovleyi (strain ATCC BAA-1151 / DSM 17278 / SZ) (Geobacter lovleyi).